A 260-amino-acid chain; its full sequence is Hydroxyethylthiazole kinase 2 (260 aa).

Met-40 is a substrate binding site. ATP-binding residues include Arg-116 and Thr-161. Ala-188 contributes to the substrate binding site.

This sequence belongs to the Thz kinase family. The cofactor is Mg(2+).

It carries out the reaction 5-(2-hydroxyethyl)-4-methylthiazole + ATP = 4-methyl-5-(2-phosphooxyethyl)-thiazole + ADP + H(+). Its pathway is cofactor biosynthesis; thiamine diphosphate biosynthesis; 4-methyl-5-(2-phosphoethyl)-thiazole from 5-(2-hydroxyethyl)-4-methylthiazole: step 1/1. Functionally, catalyzes the phosphorylation of the hydroxyl group of 4-methyl-5-beta-hydroxyethylthiazole (THZ). The sequence is that of Hydroxyethylthiazole kinase 2 from Oceanobacillus iheyensis (strain DSM 14371 / CIP 107618 / JCM 11309 / KCTC 3954 / HTE831).